The chain runs to 296 residues: Mycothiol acetyltransferase (296 aa).

2 consecutive N-acetyltransferase domains span residues 17–146 and 156–296; these read YNHR…AVYD and LKTA…VYEK. E44 is a 1D-myo-inositol 2-(L-cysteinylamino)-2-deoxy-alpha-D-glucopyranoside binding site. 81–83 serves as a coordination point for acetyl-CoA; that stretch reads LAV. 1D-myo-inositol 2-(L-cysteinylamino)-2-deoxy-alpha-D-glucopyranoside is bound by residues E183, K222, and E230. Residues 234–236 and 241–247 contribute to the acetyl-CoA site; these read VGL and RGKGLGD. 1D-myo-inositol 2-(L-cysteinylamino)-2-deoxy-alpha-D-glucopyranoside is bound at residue Y268.

Belongs to the acetyltransferase family. MshD subfamily. Monomer.

It catalyses the reaction 1D-myo-inositol 2-(L-cysteinylamino)-2-deoxy-alpha-D-glucopyranoside + acetyl-CoA = mycothiol + CoA + H(+). Its function is as follows. Catalyzes the transfer of acetyl from acetyl-CoA to desacetylmycothiol (Cys-GlcN-Ins) to form mycothiol. The chain is Mycothiol acetyltransferase from Corynebacterium efficiens (strain DSM 44549 / YS-314 / AJ 12310 / JCM 11189 / NBRC 100395).